The following is a 340-amino-acid chain: CMP-N-acetylneuraminate-beta-galactosamide-alpha-2,3-sialyltransferase 1 (340 aa).

Topologically, residues 1-13 are cytoplasmic; it reads MVTLRKRTLKVLT. Residues 14-34 traverse the membrane as a helical; Signal-anchor for type II membrane protein segment; the sequence is FLVLFIFLTSFFLNYSHTMVA. At 35 to 340 the chain is on the lumenal side; that stretch reads TTWFPKQMVL…INKIRIFKGR (306 aa). 3 disulfides stabilise this stretch: Cys-59–Cys-64, Cys-61–Cys-139, and Cys-142–Cys-281. Asn-79 is a glycosylation site (N-linked (GlcNAc...) asparagine). Residue Gln-105 coordinates substrate. Residue Asn-114 is glycosylated (N-linked (GlcNAc...) asparagine). Substrate contacts are provided by Asn-147 and Asn-170. Asn-201 is a glycosylation site (N-linked (GlcNAc...) asparagine). Substrate is bound by residues Tyr-230, Tyr-266, Gly-270, Gly-290, His-299, and His-316. N-linked (GlcNAc...) asparagine glycosylation occurs at Asn-323.

The protein belongs to the glycosyltransferase 29 family. Post-translationally, the soluble form derives from the membrane form by proteolytic processing. In terms of tissue distribution, expressed in several tissues. Highest expression in lung, liver, skeletal muscle, kidney, pancreas, spleen and placenta.

It is found in the golgi apparatus. It localises to the golgi stack membrane. Its subcellular location is the trans-Golgi network membrane. The protein localises to the secreted. It carries out the reaction a beta-D-galactosyl-(1-&gt;3)-N-acetyl-alpha-D-galactosaminyl derivative + CMP-N-acetyl-beta-neuraminate = an N-acetyl-alpha-neuraminyl-(2-&gt;3)-beta-D-galactosyl-(1-&gt;3)-N-acetyl-alpha-D-galactosaminyl derivative + CMP + H(+). It catalyses the reaction a ganglioside GM1 + CMP-N-acetyl-beta-neuraminate = a ganglioside GD1a + CMP + H(+). The enzyme catalyses a ganglioside GM1 (d18:1(4E)) + CMP-N-acetyl-beta-neuraminate = a ganglioside GD1a (d18:1(4E)) + CMP + H(+). The catalysed reaction is ganglioside GM1 (d18:1(4E)/18:0) + CMP-N-acetyl-beta-neuraminate = ganglioside GD1a (18:1(4E)/18:0) + CMP + H(+). It carries out the reaction a ganglioside GA1 + CMP-N-acetyl-beta-neuraminate = a ganglioside GM1b + CMP + H(+). It catalyses the reaction a ganglioside GA1 (d18:1(4E)) + CMP-N-acetyl-beta-neuraminate = a ganglioside GM1b (d18:1(4E)) + CMP + H(+). The enzyme catalyses a ganglioside GD1b + CMP-N-acetyl-beta-neuraminate = a ganglioside GT1b + CMP + H(+). The catalysed reaction is a 3-O-[beta-D-galactosyl-(1-&gt;3)-N-acetyl-alpha-D-galactosaminyl]-L-threonyl-[protein] + CMP-N-acetyl-beta-neuraminate = a 3-O-[N-acetyl-alpha-neuraminyl-(2-&gt;3)-beta-D-galactosyl-(1-&gt;3)-N-acetyl-alpha-D-galactosaminyl]-L-threonyl-[protein] + CMP + H(+). It carries out the reaction a 3-O-[beta-D-galactosyl-(1-&gt;3)-N-acetyl-alpha-D-galactosaminyl]-L-seryl-[protein] + CMP-N-acetyl-beta-neuraminate = 3-O-[N-acetyl-alpha-neuraminyl-(2-&gt;3)-beta-D-galactosyl-(1-&gt;3)-N-acetyl-alpha-D-galactosaminyl]-L-seryl-[protein] + CMP + H(+). Its pathway is protein modification; protein glycosylation. The protein operates within glycolipid biosynthesis. A beta-galactoside alpha2-&gt;3 sialyltransferase involved in terminal sialylation of glycoproteins and glycolipids. Catalyzes the transfer of sialic acid (N-acetyl-neuraminic acid; Neu5Ac) from the nucleotide sugar donor CMP-Neu5Ac onto acceptor Galbeta-(1-&gt;3)-GalNAc-terminated glycoconjugates through an alpha2-3 linkage. Adds sialic acid to the core 1 O-glycan, Galbeta-(1-&gt;3)-GalNAc-O-Ser/Thr, which is a major structure of mucin-type O-glycans. As part of a homeostatic mechanism that regulates CD8-positive T cell numbers, sialylates core 1 O-glycans of T cell glycoproteins, SPN/CD43 and PTPRC/CD45. Prevents premature apoptosis of thymic CD8-positive T cells prior to peripheral emigration, whereas in the secondary lymphoid organs controls the survival of CD8-positive memory T cells generated following a successful immune response. Transfers sialic acid to asialofetuin, presumably onto Galbeta-(1-&gt;3)-GalNAc-O-Ser. Sialylates GM1a, GA1 and GD1b gangliosides to form GD1a, GM1b and GT1b, respectively. The protein is CMP-N-acetylneuraminate-beta-galactosamide-alpha-2,3-sialyltransferase 1 of Homo sapiens (Human).